A 291-amino-acid polypeptide reads, in one-letter code: Small ribosomal subunit biogenesis GTPase RsgA (291 aa).

In terms of domain architecture, CP-type G spans 63 to 221 (QNELKRPPVS…VADTPGFSAL (159 aa)). GTP is bound by residues 112-115 (TKKD) and 164-172 (GQSGVGKST). The Zn(2+) site is built by cysteine 245, cysteine 250, histidine 252, and cysteine 258.

It belongs to the TRAFAC class YlqF/YawG GTPase family. RsgA subfamily. As to quaternary structure, monomer. Associates with 30S ribosomal subunit, binds 16S rRNA. Zn(2+) serves as cofactor.

It is found in the cytoplasm. Functionally, one of several proteins that assist in the late maturation steps of the functional core of the 30S ribosomal subunit. Helps release RbfA from mature subunits. May play a role in the assembly of ribosomal proteins into the subunit. Circularly permuted GTPase that catalyzes slow GTP hydrolysis, GTPase activity is stimulated by the 30S ribosomal subunit. This is Small ribosomal subunit biogenesis GTPase RsgA from Staphylococcus carnosus (strain TM300).